A 662-amino-acid polypeptide reads, in one-letter code: Protein associated with UVRAG as autophagy enhancer (662 aa).

2 disordered regions span residues 1 to 34 (MVSQ…RLLN) and 58 to 131 (DVQQ…SLSS). Residues 58-71 (DVQQQPQDLQSQVP) are compositionally biased toward low complexity. The segment covering 100–113 (AETTLSEDTTDSVG) has biased composition (polar residues). The span at 114–131 (SASPHGSSEKSSSFSLSS) shows a compositional bias: low complexity. S157 carries the post-translational modification Phosphoserine; by MTOR. Positions 196 to 235 (EVFVLPVDVEKENAHFYVADMIISAMEKMKCNILSQQQTE) are interaction with UVRAG. N6-acetyllysine occurs at positions 483, 523, 533, 573, and 633.

In terms of assembly, interacts with UVRAG; the interaction is direct and promotes association with the PI3K/PI3KC3 and HOPS complexes. Interacts with STX17. In terms of processing, phosphorylated by MTOR at Ser-157 under nutrient-rich conditions. Phosphorylation prevents acetylation by KAT5/TIP60 and impairs RUBCNL/PACER function and autophagosome maturation. Under autophagy induction, Phosphorylation by MTOR is repressed, enabling acetylation by KAT5/TIP60. Acetylated by KAT5/TIP60 under autophagy induction, promoting autophagosome maturation and lipid metabolism. Acetylation is prevented by phosphorylation by MTOR. Lys-483 and Lys-573 constitute the key sites for tuning function in autophagy. As to expression, expressed weakly in cervical carcinoma cell lines.

It is found in the cytoplasmic vesicle. The protein resides in the autophagosome membrane. In terms of biological role, regulator of autophagy that promotes autophagosome maturation by facilitating the biogenesis of phosphatidylinositol 3-phosphate (PtdIns(3)P) in late steps of autophagy. Acts by antagonizing RUBCN, thereby stimulating phosphatidylinositol 3-kinase activity of the PI3K/PI3KC3 complex. Following anchorage to the autophagosomal SNARE STX17, promotes the recruitment of PI3K/PI3KC3 and HOPS complexes to the autophagosome to regulate the fusion specificity of autophagosomes with late endosomes/lysosomes. Binds phosphoinositides phosphatidylinositol 3-phosphate (PtdIns(3)P), 4-phosphate (PtdIns(4)P) and 5-phosphate (PtdIns(5)P). In addition to its role in autophagy, acts as a regulator of lipid and glycogen homeostasis. May act as a tumor suppressor. The sequence is that of Protein associated with UVRAG as autophagy enhancer from Homo sapiens (Human).